Here is a 334-residue protein sequence, read N- to C-terminus: L-lactate dehydrogenase B-A chain (334 aa).

NAD(+) is bound by residues 30-58 (GQVG…VEDR) and Arg-100. The substrate site is built by Arg-107, Asn-139, and Arg-170. Asn-139 contacts NAD(+). Residue His-194 is the Proton acceptor of the active site. A substrate-binding site is contributed by Thr-249.

It belongs to the LDH/MDH superfamily. LDH family. As to quaternary structure, homotetramer.

It is found in the cytoplasm. It carries out the reaction (S)-lactate + NAD(+) = pyruvate + NADH + H(+). The protein operates within fermentation; pyruvate fermentation to lactate; (S)-lactate from pyruvate: step 1/1. This Danio rerio (Zebrafish) protein is L-lactate dehydrogenase B-A chain (ldhba).